The following is a 270-amino-acid chain: MANISAADVKKLRELTGAGMMDCKKALEEADGDFEKAAELIRIKLGKKMAERGAEREASNGLVATSGGALVELNCETDFVAKGDDFVAAAQQIADAADEAKAGDVEALKAVRLGDKTVGEVVENLAITIGEKIELGRVAYFDGPVVAYMHKRAADLPPAVGVLVEYDGAEAGARGAAMQIAAMRPQYLTREEVPGDRVAKEREIAEATSREEGKPEQAIAKITEGRLNGFFKDVVLLEQPSVTESKKSVKAVLDEAGTTVKRFARFEVGA.

Residues 77–80 (TDFV) are involved in Mg(2+) ion dislocation from EF-Tu.

This sequence belongs to the EF-Ts family.

It localises to the cytoplasm. Its function is as follows. Associates with the EF-Tu.GDP complex and induces the exchange of GDP to GTP. It remains bound to the aminoacyl-tRNA.EF-Tu.GTP complex up to the GTP hydrolysis stage on the ribosome. This is Elongation factor Ts from Nocardioides sp. (strain ATCC BAA-499 / JS614).